We begin with the raw amino-acid sequence, 659 residues long: Forkhead box protein P1-B (659 aa).

Polar residues-rich tracts occupy residues 1–16 (MMQE…TAHQ) and 32–41 (KSTTPSSDIT). Disordered stretches follow at residues 1 to 41 (MMQE…SDIT) and 229 to 263 (ENSV…NGQY). The C2H2-type zinc-finger motif lies at 289–314 (GVCKWPGCEAVFEDFQSFLKHLNNEH). A leucine-zipper region spans residues 331 to 352 (VQQLELQLAKDKERLQAMMTHL). A CTBP1-binding region spans residues 365–369 (PLNLV). Positions 379–413 (PAASPPLSLPQTPTTPTAPLTPLSQTHSVITPTSL) are disordered. The segment covering 387–404 (LPQTPTTPTAPLTPLSQT) has biased composition (low complexity). A DNA-binding region (fork-head) is located at residues 448–538 (RPPFTYASLI…PQKISGSPAL (91 aa)). The interval 590 to 659 (GAMDHGNSNG…EDDHGTEDML (70 aa)) is disordered. Positions 595–605 (GNSNGSDSSPG) are enriched in polar residues. Over residues 641–659 (PDFDHHRDYEDDHGTEDML) the composition is skewed to basic and acidic residues.

Shows complex and dynamic expression during early embryonic development. Prominent in many regions of the developing central nervous system, particularly in midbrain-hindbrain boundary, hindbrain and spinal cord. Strongly expressed in the retina, ear, branchial arches, hatching gland, heart, pronephric duct, gut, proctodeum, pectoral fin and swim bladder.

Its subcellular location is the nucleus. Its function is as follows. Transcriptional repressor. In Danio rerio (Zebrafish), this protein is Forkhead box protein P1-B (foxp1b).